A 29-amino-acid chain; its full sequence is Cyclotide psyleio B (29 aa).

Residues 1–29 (GDLPICGETCFGGTCNTPGCVCAWPVCNR) constitute a cross-link (cyclopeptide (Gly-Arg)). Intrachain disulfides connect Cys6–Cys20, Cys10–Cys22, and Cys15–Cys27.

Post-translationally, this is a cyclic peptide.

Its function is as follows. Probably participates in a plant defense mechanism. This Psychotria brachyceras protein is Cyclotide psyleio B.